A 251-amino-acid chain; its full sequence is MLLIPAIDLKDGQCVRLKQGDMDQATIFSEDPAAMARKWVDLGARRLHLVDLNGAFAGKPKNLEAIEAILGEVGDEIPVQLGGGIRSLETIEKYLDAGLSYVIIGTAAVKDPGFLQDACSAFAGNIIVGLDAKDGKVATDGWSKLTGHEVIDLARKFEDYGVESIVYTDIGRDGMLQGINIEATVKLAQAVGIPVIASGGLSNIVDIEKLCEVEDEGIEGVICGRAIYSGDLDFAAAQKRADELNGELDDA.

Residue aspartate 8 is the Proton acceptor of the active site. Residue aspartate 131 is the Proton donor of the active site.

This sequence belongs to the HisA/HisF family.

It is found in the cytoplasm. It catalyses the reaction 1-(5-phospho-beta-D-ribosyl)-5-[(5-phospho-beta-D-ribosylamino)methylideneamino]imidazole-4-carboxamide = 5-[(5-phospho-1-deoxy-D-ribulos-1-ylimino)methylamino]-1-(5-phospho-beta-D-ribosyl)imidazole-4-carboxamide. Its pathway is amino-acid biosynthesis; L-histidine biosynthesis; L-histidine from 5-phospho-alpha-D-ribose 1-diphosphate: step 4/9. The sequence is that of 1-(5-phosphoribosyl)-5-[(5-phosphoribosylamino)methylideneamino] imidazole-4-carboxamide isomerase from Burkholderia pseudomallei (strain 1710b).